Here is a 199-residue protein sequence, read N- to C-terminus: Hematopoietic prostaglandin D synthase (199 aa).

Residues 2 to 79 form the GST N-terminal domain; sequence PNYKLTYFNM…YLTKNTDLAG (78 aa). Residues Y8, R14, W39, 49–51, and 63–64 each bind glutathione; these read GKI and QS. The 119-residue stretch at 81–199 folds into the GST C-terminal domain; it reads TEMEQCHVDA…WIKRRPQTKL (119 aa).

This sequence belongs to the GST superfamily. Sigma family. Homodimer. Requires glutathione as cofactor. As to expression, expressed in a number of megakaryocytic cell lines but not in platelets. Highly expressed in adipose tissue, macrophages and placenta. Also expressed at lower levels in lung, heart, lymph nodes, appendix, bone marrow and fetal liver.

It is found in the cytoplasm. The catalysed reaction is prostaglandin H2 = prostaglandin D2. The enzyme catalyses RX + glutathione = an S-substituted glutathione + a halide anion + H(+). It carries out the reaction 2-glyceryl-prostaglandin H2 = 2-glyceryl-prostaglandin D2. With respect to regulation, prostaglandin PGD2 synthesis is stimulated by calcium and magnesium ions. One calcium or magnesium ion is bound between the subunits of the homodimer. The interactions with the protein are for the most part mediated via water molecules. Magnesium increases the affinity for glutathione, while calcium has no effect on the affinity for glutathione. Functionally, bifunctional enzyme which catalyzes both the conversion of PGH2 to PGD2, a prostaglandin involved in smooth muscle contraction/relaxation and a potent inhibitor of platelet aggregation, and the conjugation of glutathione with a wide range of aryl halides and organic isothiocyanates. Also exhibits low glutathione-peroxidase activity towards cumene hydroperoxide. This chain is Hematopoietic prostaglandin D synthase, found in Homo sapiens (Human).